Consider the following 113-residue polypeptide: Guanylate cyclase activator 2B (113 aa).

A signal peptide spans Met-1–Ser-27. The propeptide occupies Val-28–Ala-97. Cystine bridges form between Cys-68-Cys-81, Cys-101-Cys-109, and Cys-104-Cys-112.

Belongs to the guanylin family.

It is found in the secreted. Functionally, endogenous activator of intestinal guanylate cyclase. It stimulates this enzyme through the same receptor binding region as the heat-stable enterotoxins. May be a potent physiological regulator of intestinal fluid and electrolyte transport. May be an autocrine/paracrine regulator of intestinal salt and water transport. This Sus scrofa (Pig) protein is Guanylate cyclase activator 2B (GUCA2B).